A 172-amino-acid polypeptide reads, in one-letter code: S-ribosylhomocysteine lyase (172 aa).

Residues H54, H58, and C128 each coordinate Fe cation.

The protein belongs to the LuxS family. In terms of assembly, homodimer. Requires Fe cation as cofactor.

The catalysed reaction is S-(5-deoxy-D-ribos-5-yl)-L-homocysteine = (S)-4,5-dihydroxypentane-2,3-dione + L-homocysteine. Its function is as follows. Involved in the synthesis of autoinducer 2 (AI-2) which is secreted by bacteria and is used to communicate both the cell density and the metabolic potential of the environment. The regulation of gene expression in response to changes in cell density is called quorum sensing. Catalyzes the transformation of S-ribosylhomocysteine (RHC) to homocysteine (HC) and 4,5-dihydroxy-2,3-pentadione (DPD). The sequence is that of S-ribosylhomocysteine lyase from Vibrio alginolyticus.